We begin with the raw amino-acid sequence, 100 residues long: Mini zinc finger protein 2 (100 aa).

The disordered stretch occupies residues 1 to 26 (MRKRQVVLRRASPEEPSRSSSTASSL). A ZF-HD dimerization-type; degenerate zinc finger spans residues 33 to 83 (YGECQKNHAAAVGGYAVDGCREFMASRGEEGTVAALTCAACGCHRSFHRRE).

As to quaternary structure, homo- and heterodimers. Interacts with ZHD1, ZHD3, ZHD5, ZHD8, ZHD10 and ZHD13. Mostly expressed in stems, flowers and siliques, and, to a lower extent, in inflorescence.

It is found in the cytoplasm. Functionally, inhibits zinc finger homeodomain (ZHD) transcription factors by interacting with them to prevent both their nuclear localization and their DNA-binding properties. Involved in integrating signals from multiple hormones by regulating the expression of specific genes. In Arabidopsis thaliana (Mouse-ear cress), this protein is Mini zinc finger protein 2 (MIF2).